The following is a 273-amino-acid chain: HTH-type transcriptional activator RhaS (273 aa).

The 99-residue stretch at 174–272 (YQLLDWLQNN…SQSPRDLRSQ (99 aa)) folds into the HTH araC/xylS-type domain. 2 DNA-binding regions (H-T-H motif) span residues 191–212 (PELA…KNKT) and 239–262 (VTDI…KREF).

As to quaternary structure, binds DNA as a dimer.

The protein resides in the cytoplasm. Its function is as follows. Activates expression of the rhaBAD and rhaT operons. This is HTH-type transcriptional activator RhaS from Yersinia pseudotuberculosis serotype O:1b (strain IP 31758).